The primary structure comprises 484 residues: Coronin-1B (484 aa).

Residue Ser2 is modified to Phosphoserine. WD repeat units lie at residues 80-120, 130-170, 174-213, 217-260, and 265-305; these read GHTG…LTSP, GHTK…ELYR, LHPD…LVAE, AHEG…EPMA, and DSSN…PYIH. The stretch at 447–481 forms a coiled coil; the sequence is KLEEVMHGLRALRVLVKEQGERISRLEEHLGRMEN.

This sequence belongs to the WD repeat coronin family. Forms homooligomers, but does not form complexes with the other coronins. Interacts with Arp2/3 complex components, including ACTR2, ARPC1B and ARPC2. Binds actin. In terms of processing, phosphorylation on Ser-2 regulates the interaction with the Arp2/3 complex and cell motility in fibroblasts. Phosphorylation does not seem to affect subcellular location.

The protein resides in the cytoplasm. The protein localises to the cytoskeleton. It localises to the stress fiber. Regulates leading edge dynamics and cell motility in fibroblasts. May be involved in cytokinesis and signal transduction. The polypeptide is Coronin-1B (Coro1b) (Rattus norvegicus (Rat)).